A 338-amino-acid chain; its full sequence is Glutamyl-tRNA reductase (338 aa).

Substrate is bound by residues 50–53 (TCHR), Ser-102, 107–109 (ETE), and Gln-113. Cys-51 serves as the catalytic Nucleophile. Residue 181–186 (GYSEIN) participates in NADP(+) binding.

Belongs to the glutamyl-tRNA reductase family. As to quaternary structure, homodimer.

The enzyme catalyses (S)-4-amino-5-oxopentanoate + tRNA(Glu) + NADP(+) = L-glutamyl-tRNA(Glu) + NADPH + H(+). It functions in the pathway porphyrin-containing compound metabolism; protoporphyrin-IX biosynthesis; 5-aminolevulinate from L-glutamyl-tRNA(Glu): step 1/2. In terms of biological role, catalyzes the NADPH-dependent reduction of glutamyl-tRNA(Glu) to glutamate 1-semialdehyde (GSA). The sequence is that of Glutamyl-tRNA reductase from Chlamydia abortus (strain DSM 27085 / S26/3) (Chlamydophila abortus).